The following is a 364-amino-acid chain: Esculetin O-methyltransferase (364 aa).

Asn132 serves as a coordination point for bergaptol. Positions 209, 232, 252, 253, 265, and 266 each coordinate S-adenosyl-L-homocysteine. His270 is a binding site for bergaptol. His270 functions as the Proton acceptor in the catalytic mechanism.

This sequence belongs to the class I-like SAM-binding methyltransferase superfamily. Cation-independent O-methyltransferase family. COMT subfamily. In terms of assembly, homodimer. Expressed ubiquitously.

The catalysed reaction is bergaptol + S-adenosyl-L-methionine = bergapten + S-adenosyl-L-homocysteine. It carries out the reaction xanthotoxol + S-adenosyl-L-methionine = xanthotoxin + S-adenosyl-L-homocysteine + H(+). It catalyses the reaction esculetin + S-adenosyl-L-methionine = isoscopoletin + S-adenosyl-L-homocysteine + H(+). The enzyme catalyses esculetin + S-adenosyl-L-methionine = scopoletin + S-adenosyl-L-homocysteine + H(+). Its pathway is aromatic compound metabolism. It functions in the pathway secondary metabolite biosynthesis. Inhibited by zinc Zn(2+), copper Cu(2+) and silver Ag(+) ions. O-methyltransferase involved in the biosynthesis of methoxylated coumarins natural products such as isoscopoletin, scopoletin, xanthotoxin and bergapten, photosensitizers used for medical purpose such as treating psoriasis and vitiligo or facilitating resistance to microbial infection and other stresses. Catalyzes the methylation of esculetin, bergaptol and xanthotoxol, but seems inactive on scopoletin and isoscopoletin. In Kitagawia praeruptora (Peucedanum praeruptorum), this protein is Esculetin O-methyltransferase.